Consider the following 127-residue polypeptide: MSANSPPTIKCNVVTHYIEEQSEPNNQRYVFSYTITIRNLGKGSAKLLSRYWLITDANGKRLVIEGEGVVGEQPEIKMNEEYTYTSGTIIETPLGVMQGHYVMGTEDGETFKAEVSPFRLAIPNILH.

The 125-residue stretch at 3–127 folds into the ApaG domain; that stretch reads ANSPPTIKCN…FRLAIPNILH (125 aa).

This Photobacterium profundum (strain SS9) protein is Protein ApaG.